Here is a 174-residue protein sequence, read N- to C-terminus: Centrosomal protein 20 (174 aa).

The interval 1-104 is necessary and sufficient for homooligomerization and localization to centrosomes and pericentriolar satellites; it reads MATVTELKAV…AFEESKDNSI (104 aa). The LisH domain occupies 49–81; it reads ENLLINELIREYLEFNKYKYTASVLIAESGQPV. A disordered region spans residues 136–174; sequence TKHLSWKPSRRPDDDHVRKDTGPRTTTEELPAAAQAVSR. The residue at position 144 (Ser-144) is a Phosphoserine. A compositionally biased stretch (basic and acidic residues) spans 145–157; that stretch reads RRPDDDHVRKDTG.

This sequence belongs to the CEP43 family. In terms of assembly, homooligomer; probably required for localization to centrosomes. Forms a complex with KIAA0753/OFIP and OFD1; within this complex may stabilize the interaction between OFD1 and KIAA0753/OFIP. Interacts with PCM1; this interaction may be mediated by KIAA0753/OFIP.

It localises to the cytoplasm. The protein localises to the cytoskeleton. It is found in the microtubule organizing center. The protein resides in the centrosome. Its subcellular location is the centriole. It localises to the cell projection. The protein localises to the cilium. It is found in the cilium basal body. The protein resides in the cytoplasmic granule. Its subcellular location is the centriolar satellite. Involved in the biogenesis of cilia. Required for the recruitment of PLK1 to centrosomes and S phase progression. This is Centrosomal protein 20 from Mus musculus (Mouse).